Reading from the N-terminus, the 480-residue chain is UDP-glucose 6-dehydrogenase 5 (480 aa).

Residues 8 to 13, Asp33, Arg38, 86 to 90, 127 to 128, and Glu161 each bind NAD(+); these read GAGYVG, VNTPT, and ST. Substrate contacts are provided by residues 157–161, 216–223, and 256–269; these read EFLAE, KLAANAFL, and RIGPKFLNASVGFG. Cys272 acts as the Nucleophile in catalysis. 272–275 is a binding site for NAD(+); the sequence is CFQK. 334-335 contacts substrate; it reads FK. Arg342 is a binding site for NAD(+). Ser393 bears the Phosphoserine mark. Substrate is bound at residue Arg447.

This sequence belongs to the UDP-glucose/GDP-mannose dehydrogenase family.

It carries out the reaction UDP-alpha-D-glucose + 2 NAD(+) + H2O = UDP-alpha-D-glucuronate + 2 NADH + 3 H(+). It functions in the pathway nucleotide-sugar biosynthesis; UDP-alpha-D-glucuronate biosynthesis; UDP-alpha-D-glucuronate from UDP-alpha-D-glucose: step 1/1. Involved in the biosynthesis of UDP-glucuronic acid (UDP-GlcA), providing nucleotide sugars for cell-wall polymers. The polypeptide is UDP-glucose 6-dehydrogenase 5 (UGD5) (Oryza sativa subsp. japonica (Rice)).